Here is a 199-residue protein sequence, read N- to C-terminus: Recombination protein RecR (199 aa).

The C4-type zinc finger occupies 57-72 (CQSCRTFTEETYCPIC). The Toprim domain occupies 81-176 (EVICVVETPA…TVSRIAHGVP (96 aa)).

This sequence belongs to the RecR family.

May play a role in DNA repair. It seems to be involved in an RecBC-independent recombinational process of DNA repair. It may act with RecF and RecO. The protein is Recombination protein RecR of Shewanella pealeana (strain ATCC 700345 / ANG-SQ1).